A 368-amino-acid polypeptide reads, in one-letter code: Putative agmatine deiminase (368 aa).

The Amidino-cysteine intermediate role is filled by C359.

This sequence belongs to the agmatine deiminase family.

The enzyme catalyses agmatine + H2O = N-carbamoylputrescine + NH4(+). The protein is Putative agmatine deiminase of Pectobacterium atrosepticum (strain SCRI 1043 / ATCC BAA-672) (Erwinia carotovora subsp. atroseptica).